Reading from the N-terminus, the 379-residue chain is MKLIIAGGGTGGHLFPGIAVAEEFLSRDPANQVLFVGTERGIEARAVPAAGFPLELISAAGIRGKGGLGKLRGAAMMFNGYRQSCRLLDRFRPDAVLGVGGYASLPMLLAARTRQVPSFIHEQNAVPGMTNRLLSRFADRIFITLEESSRFFAGRRTLLTGNPLRRQILDRLGTRDQGPGIRDQEKHMTDSTGPASRVPGPRFNLLVFGGSQGAHAINMAMVAALPLLKRASVRLGITHQTGESDRERVAAAYRSAGVEARVLPFIADMASEYARADLVVCRAGATTIAEVTALAKACLFIPFPYAVDDHQRRNAEALLRQSACFMLLERELSAERLAALILQLAGDPRLVRRTGELAFSMARLDAARIIVDEILTPTN.

UDP-N-acetyl-alpha-D-glucosamine is bound by residues 10 to 12, Asn-124, and Arg-165; that span reads TGG. Residues 174–195 are disordered; that stretch reads TRDQGPGIRDQEKHMTDSTGPA. UDP-N-acetyl-alpha-D-glucosamine-binding residues include Ser-211, Ile-266, and Gln-311.

This sequence belongs to the glycosyltransferase 28 family. MurG subfamily.

The protein resides in the cell inner membrane. The catalysed reaction is di-trans,octa-cis-undecaprenyl diphospho-N-acetyl-alpha-D-muramoyl-L-alanyl-D-glutamyl-meso-2,6-diaminopimeloyl-D-alanyl-D-alanine + UDP-N-acetyl-alpha-D-glucosamine = di-trans,octa-cis-undecaprenyl diphospho-[N-acetyl-alpha-D-glucosaminyl-(1-&gt;4)]-N-acetyl-alpha-D-muramoyl-L-alanyl-D-glutamyl-meso-2,6-diaminopimeloyl-D-alanyl-D-alanine + UDP + H(+). It participates in cell wall biogenesis; peptidoglycan biosynthesis. Its function is as follows. Cell wall formation. Catalyzes the transfer of a GlcNAc subunit on undecaprenyl-pyrophosphoryl-MurNAc-pentapeptide (lipid intermediate I) to form undecaprenyl-pyrophosphoryl-MurNAc-(pentapeptide)GlcNAc (lipid intermediate II). The polypeptide is UDP-N-acetylglucosamine--N-acetylmuramyl-(pentapeptide) pyrophosphoryl-undecaprenol N-acetylglucosamine transferase (Pelobacter propionicus (strain DSM 2379 / NBRC 103807 / OttBd1)).